The following is a 297-amino-acid chain: Homoserine kinase (297 aa).

Residue 82–92 (PLTRGLGSSAS) coordinates ATP.

The protein belongs to the GHMP kinase family. Homoserine kinase subfamily.

Its subcellular location is the cytoplasm. The catalysed reaction is L-homoserine + ATP = O-phospho-L-homoserine + ADP + H(+). Its pathway is amino-acid biosynthesis; L-threonine biosynthesis; L-threonine from L-aspartate: step 4/5. In terms of biological role, catalyzes the ATP-dependent phosphorylation of L-homoserine to L-homoserine phosphate. The protein is Homoserine kinase of Bacillus thuringiensis (strain Al Hakam).